The chain runs to 438 residues: Minor capsid protein p49 (438 aa).

The tract at residues 145-167 (NCLTQPSSLPSLKNPKNSSVPST) is disordered.

The protein belongs to the asfivirus p49 structural protein family.

The protein resides in the virion. In terms of biological role, together with the penton and the other minor capsid proteins (M1249L, p17), forms a complicated network immediately below the outer capsid shell, stabilizing the whole capsid. Plays an essential role in the formation of infectious virus particles. Especially required for the formation of the capsid vertices. During virion assembly, associates with the membrane and probably mediates the docking of the penton complex to the inner membrane, where it recruits the capsomers to form the penton core. This Ornithodoros (relapsing fever ticks) protein is Minor capsid protein p49.